The primary structure comprises 524 residues: Serine/threonine-protein kinase PAK 2 (524 aa).

The tract at residues 1 to 81 (MSDNGELEDK…PEISPPSDFE (81 aa)) is disordered. The residue at position 2 (serine 2) is an N-acetylserine. A phosphoserine mark is found at serine 2, serine 20, serine 55, serine 58, and serine 59. Threonine 60 is subject to Phosphothreonine. An N6-acetyllysine modification is found at lysine 62. Serine 64 is modified (phosphoserine). A compositionally biased stretch (basic and acidic residues) spans 67–81 (KEKERPEISPPSDFE). The GTPase-binding stretch occupies residues 69–112 (KERPEISPPSDFEHTIHVGFDAVTGEFTGMPEQWARLLQTSNIT). Positions 69 to 137 (KERPEISPPS…KFYDSNTVKQ (69 aa)) are autoregulatory region. In terms of domain architecture, CRIB spans 74-87 (ISPPSDFEHTIHVG). The tract at residues 88-248 (FDAVTGEFTG…IVSIGDPKKK (161 aa)) is linker. Residue lysine 128 is modified to N6-acetyllysine. Threonine 134 is modified (phosphothreonine). A Phosphotyrosine modification is found at tyrosine 139. Phosphoserine is present on serine 141. Positions 142–190 (FTPPEKDGFPSGTPALNTKGSETSAVVTEEDDDDEDAAPPVIAPRPDHT) are disordered. A Phosphothreonine modification is found at threonine 143. At serine 152 the chain carries Phosphoserine. 3 positions are modified to phosphothreonine: threonine 154, threonine 159, and threonine 169. Positions 155-167 (PALNTKGSETSAV) are enriched in polar residues. The span at 169–178 (TEEDDDDEDA) shows a compositional bias: acidic residues. At serine 197 the chain carries Phosphoserine. The interval 204–228 (APVGDSNVDSGAKSSDKQKKKAKMT) is disordered. The Nuclear localization signal signature appears at 245 to 251 (PKKKYTR). The Protein kinase domain occupies 249–500 (YTRYEKIGQG…AKELLQHPFL (252 aa)). Residues 255–263 (IGQGASGTV) and lysine 278 each bind ATP. Aspartate 368 (proton acceptor) is an active-site residue. Residue threonine 402 is modified to Phosphothreonine; by autocatalysis.

The protein belongs to the protein kinase superfamily. STE Ser/Thr protein kinase family. STE20 subfamily. As to quaternary structure, interacts tightly with GTP-bound but not GDP-bound CDC42/p21 and RAC1. Interacts with SH3MD4. Interacts with SCRIB. Interacts with ARHGEF7 and GIT1. PAK-2p34 interacts with ARHGAP10. Interacts with RAC1. Post-translationally, full-length PAK2 is autophosphorylated when activated by CDC42/p21. Following cleavage, both peptides, PAK-2p27 and PAK-2p34, become highly autophosphorylated. Autophosphorylation of PAK-2p27 can occur in the absence of any effectors and is dependent on phosphorylation of Thr-402, because PAK-2p27 is acting as an exogenous substrate. During apoptosis proteolytically cleaved by caspase-3 or caspase-3-like proteases to yield active PAK-2p34. In terms of processing, ubiquitinated, leading to its proteasomal degradation.

Its subcellular location is the cytoplasm. The protein localises to the nucleus. It is found in the perinuclear region. The protein resides in the membrane. The enzyme catalyses L-seryl-[protein] + ATP = O-phospho-L-seryl-[protein] + ADP + H(+). It catalyses the reaction L-threonyl-[protein] + ATP = O-phospho-L-threonyl-[protein] + ADP + H(+). Its activity is regulated as follows. Activated by binding small G proteins. Binding of GTP-bound CDC42 or RAC1 to the autoregulatory region releases monomers from the autoinhibited dimer, enables phosphorylation of Thr-402 and allows the kinase domain to adopt an active structure. Following caspase cleavage, autophosphorylated PAK-2p34 is constitutively active. Functionally, serine/threonine protein kinase that plays a role in a variety of different signaling pathways including cytoskeleton regulation, cell motility, cell cycle progression, apoptosis or proliferation. Acts as a downstream effector of the small GTPases CDC42 and RAC1. Activation by the binding of active CDC42 and RAC1 results in a conformational change and a subsequent autophosphorylation on several serine and/or threonine residues. Full-length PAK2 stimulates cell survival and cell growth. Phosphorylates MAPK4 and MAPK6 and activates the downstream target MAPKAPK5, a regulator of F-actin polymerization and cell migration. Phosphorylates JUN and plays an important role in EGF-induced cell proliferation. Phosphorylates many other substrates including histone H4 to promote assembly of H3.3 and H4 into nucleosomes, BAD, ribosomal protein S6, or MBP. Phosphorylates CASP7, thereby preventing its activity. Additionally, associates with ARHGEF7 and GIT1 to perform kinase-independent functions such as spindle orientation control during mitosis. On the other hand, apoptotic stimuli such as DNA damage lead to caspase-mediated cleavage of PAK2, generating PAK-2p34, an active p34 fragment that translocates to the nucleus and promotes cellular apoptosis involving the JNK signaling pathway. Caspase-activated PAK2 phosphorylates MKNK1 and reduces cellular translation. This Rattus norvegicus (Rat) protein is Serine/threonine-protein kinase PAK 2 (Pak2).